The primary structure comprises 498 residues: NAD(P)H-quinone oxidoreductase chain 4, chloroplastic (498 aa).

14 helical membrane-spanning segments follow: residues 4 to 24 (LPWLTLIVLFPFSASFLIPLL), 37 to 57 (LGICALEFLLITFTFCCQFHL), 87 to 107 (MGLILLTGFITTLAILAAWPV), 111 to 131 (VRLFYFLMLAMYSGQIGLFAS), 134 to 154 (ILLFFFMWELELIPVYLLLSM), 167 to 187 (FLLYTAGGSIFLLVGSLTMGL), 207 to 227 (IAVETALYFSFLIAYAVKLPI), 242 to 262 (HYSTCMLLAGILLKMGGYGLI), 274 to 294 (FLFSPLLVTMGAVQIAYASLI), 305 to 325 (IAYSSVSHMGFVIIGISSITD), 331 to 351 (AILQMISHGLIGAALFFLAGI), 386 to 406 (LALPGMSSFVAEFLIFLGIVT), 417 to 437 (IILFIGAIGVILTPIYLLSML), and 461 to 481 (IFISVFILLPILGIGIYPNLV).

This sequence belongs to the complex I subunit 4 family.

Its subcellular location is the plastid. It localises to the chloroplast thylakoid membrane. It catalyses the reaction a plastoquinone + NADH + (n+1) H(+)(in) = a plastoquinol + NAD(+) + n H(+)(out). It carries out the reaction a plastoquinone + NADPH + (n+1) H(+)(in) = a plastoquinol + NADP(+) + n H(+)(out). The chain is NAD(P)H-quinone oxidoreductase chain 4, chloroplastic from Psilotum nudum (Whisk fern).